The primary structure comprises 701 residues: Sodium/hydrogen exchanger 6 (701 aa).

Helical transmembrane passes span 71 to 91 (SANLLIFILLLTLTILTIWLF) and 103 to 123 (GLAMIYGLLVGLVLRYGIHVP). A glycan (N-linked (GlcNAc...) asparagine) is linked at N128. Transmembrane regions (helical) follow at residues 176–196 (VTFDPEVFFNILLPPIIFYAG), 211–231 (ILAYAFLGTAISCFVIGSIMY), 252–272 (CLLFGAIVSATDPVTVLAIFH), 278–298 (VELYALLFGESVLNDAVAIVL), 324–344 (IGIFLGIFSGSFAMGAATGVV), 372–392 (TFLLAEAWGFTGVVAVLFCGI), 414–434 (FELLNFLAENFIFSYMGLTLF), and 436–456 (FQNHVFNPTFVVGAFVAIFLG). K475 is covalently cross-linked (Glycyl lysine isopeptide (Lys-Gly) (interchain with G-Cter in ubiquitin)). The next 2 membrane-spanning stretches (helical) occupy residues 479 to 499 (NFQHMMMFAGLRGAMAFALAI) and 515 to 535 (LLIVFFTVWVFGGGTTAMLSC).

Belongs to the monovalent cation:proton antiporter 1 (CPA1) transporter (TC 2.A.36) family. In terms of assembly, homodimer. Interacts with RACK1; regulates the distribution of SLC9A6 between endosomes and the plasma membrane. Ubiquitinated (in vitro). In terms of processing, glycosylated. In terms of tissue distribution, ubiquitous. High expression in brain, skeletal muscle, and heart, but is also detected at lower levels in most other tissues.

The protein resides in the endosome membrane. It is found in the recycling endosome membrane. The protein localises to the early endosome membrane. It localises to the late endosome membrane. Its subcellular location is the cell membrane. It catalyses the reaction Na(+)(in) + H(+)(out) = Na(+)(out) + H(+)(in). The enzyme catalyses K(+)(in) + H(+)(out) = K(+)(out) + H(+)(in). In terms of biological role, endosomal Na(+), K(+)/H(+) antiporter. Mediates the electroneutral exchange of endosomal luminal H(+) for a cytosolic Na(+) or K(+). By facilitating proton efflux, SLC9A6 counteracts the acidity generated by vacuolar (V)-ATPase, thereby limiting luminal acidification. Responsible for alkalizing and maintaining the endosomal pH, and consequently in, e.g., endosome maturation and trafficking of recycling endosomal cargo. Plays a critical role during neurodevelopment by regulating synaptic development and plasticity. Implicated in the maintenance of cell polarity in a manner that is dependent on its ability to modulate intravesicular pH. Regulates intracelular pH in some specialized cells, osteoclasts and stereocilia where this transporter localizes to the plasma membrane. In Homo sapiens (Human), this protein is Sodium/hydrogen exchanger 6.